A 109-amino-acid chain; its full sequence is Cell division protein ZapA (109 aa).

The stretch at 71 to 99 forms a coiled coil; that stretch reads KTRDYASNMEQRIRMLQQTIEQALLEQGR.

The protein belongs to the ZapA family. Type 1 subfamily. As to quaternary structure, homodimer. Interacts with FtsZ.

The protein resides in the cytoplasm. Activator of cell division through the inhibition of FtsZ GTPase activity, therefore promoting FtsZ assembly into bundles of protofilaments necessary for the formation of the division Z ring. It is recruited early at mid-cell but it is not essential for cell division. The chain is Cell division protein ZapA from Serratia proteamaculans (strain 568).